Reading from the N-terminus, the 146-residue chain is Hemoglobin subunit beta (146 aa).

Positions 2–146 (PFSAHEEKLI…VAAALSAEYH (145 aa)) constitute a Globin domain. H63 and H92 together coordinate heme b.

Belongs to the globin family. As to quaternary structure, heterotetramer of two alpha chains and two beta chains. In terms of tissue distribution, red blood cells.

Its function is as follows. Involved in oxygen transport from the lung to the various peripheral tissues. The chain is Hemoglobin subunit beta (HBB) from Caiman crocodilus (Spectacled caiman).